The chain runs to 162 residues: Phosphopantetheine adenylyltransferase (162 aa).

Position 11 (S11) interacts with substrate. ATP is bound by residues 11–12 (SF) and H19. Positions 43, 76, and 90 each coordinate substrate. Residues 91 to 93 (GLR), E101, and 126 to 132 (HLYISSS) contribute to the ATP site.

It belongs to the bacterial CoaD family. In terms of assembly, homohexamer. Mg(2+) serves as cofactor.

It localises to the cytoplasm. The enzyme catalyses (R)-4'-phosphopantetheine + ATP + H(+) = 3'-dephospho-CoA + diphosphate. It participates in cofactor biosynthesis; coenzyme A biosynthesis; CoA from (R)-pantothenate: step 4/5. Reversibly transfers an adenylyl group from ATP to 4'-phosphopantetheine, yielding dephospho-CoA (dPCoA) and pyrophosphate. This is Phosphopantetheine adenylyltransferase from Streptococcus pneumoniae (strain JJA).